The sequence spans 779 residues: Polyribonucleotide nucleotidyltransferase (779 aa).

Aspartate 490 and aspartate 496 together coordinate Mg(2+). The KH domain maps to proline 557–valine 618. In terms of domain architecture, S1 motif spans glycine 625 to proline 693. Over residues valine 699–arginine 752 the composition is skewed to basic and acidic residues. Residues valine 699–aspartate 779 form a disordered region. The span at proline 757 to aspartate 767 shows a compositional bias: polar residues.

It belongs to the polyribonucleotide nucleotidyltransferase family. Mg(2+) serves as cofactor.

It localises to the cytoplasm. The enzyme catalyses RNA(n+1) + phosphate = RNA(n) + a ribonucleoside 5'-diphosphate. In terms of biological role, involved in mRNA degradation. Catalyzes the phosphorolysis of single-stranded polyribonucleotides processively in the 3'- to 5'-direction. The protein is Polyribonucleotide nucleotidyltransferase of Deinococcus radiodurans (strain ATCC 13939 / DSM 20539 / JCM 16871 / CCUG 27074 / LMG 4051 / NBRC 15346 / NCIMB 9279 / VKM B-1422 / R1).